The following is a 217-amino-acid chain: Protein-L-isoaspartate O-methyltransferase (217 aa).

Serine 61 is a catalytic residue.

The protein belongs to the methyltransferase superfamily. L-isoaspartyl/D-aspartyl protein methyltransferase family.

Its subcellular location is the cytoplasm. The enzyme catalyses [protein]-L-isoaspartate + S-adenosyl-L-methionine = [protein]-L-isoaspartate alpha-methyl ester + S-adenosyl-L-homocysteine. In terms of biological role, catalyzes the methyl esterification of L-isoaspartyl residues in peptides and proteins that result from spontaneous decomposition of normal L-aspartyl and L-asparaginyl residues. It plays a role in the repair and/or degradation of damaged proteins. The chain is Protein-L-isoaspartate O-methyltransferase from Syntrophotalea carbinolica (strain DSM 2380 / NBRC 103641 / GraBd1) (Pelobacter carbinolicus).